Reading from the N-terminus, the 288-residue chain is AA9 family lytic polysaccharide monooxygenase A (288 aa).

The signal sequence occupies residues 1-22 (MKSTSATKFSVLAAATFAAAHG). Cu(2+)-binding residues include histidine 21 and histidine 104. Cystine bridges form between cysteine 74-cysteine 191 and cysteine 115-cysteine 119. A glycan (N-linked (GlcNAc...) asparagine) is linked at asparagine 151. Residues histidine 177 and glutamine 186 each contribute to the O2 site. Cu(2+) is bound at residue tyrosine 188. Residues 236–270 (PEPYKSGSGSSDNAAEAVSSAAAEEPAAAATSAAA) form a disordered region. A compositionally biased stretch (low complexity) spans 249 to 270 (AAEAVSSAAAEEPAAAATSAAA).

This sequence belongs to the polysaccharide monooxygenase AA9 family. Cu(2+) serves as cofactor.

The protein resides in the secreted. It catalyses the reaction [(1-&gt;4)-beta-D-glucosyl]n+m + reduced acceptor + O2 = 4-dehydro-beta-D-glucosyl-[(1-&gt;4)-beta-D-glucosyl]n-1 + [(1-&gt;4)-beta-D-glucosyl]m + acceptor + H2O.. Functionally, lytic polysaccharide monooxygenase (LPMO) that depolymerizes crystalline and amorphous polysaccharides via the oxidation of scissile alpha- or beta-(1-4)-glycosidic bonds, yielding C1 and C4 oxidation products. Catalysis by LPMOs requires the reduction of the active-site copper from Cu(II) to Cu(I) by a reducing agent and H(2)O(2) or O(2) as a cosubstrate. Active on cellulose and on xyloglucan for deconstruction of plant biomass. This is AA9 family lytic polysaccharide monooxygenase A from Geotrichum candidum (Oospora lactis).